The sequence spans 433 residues: Succinate--CoA ligase [GDP-forming] subunit beta, mitochondrial (433 aa).

A mitochondrion-targeting transit peptide spans 1-38 (IPAAPVAAQARKLLRDLAFRPPLLAARSQVVQLTPRRW). The region spanning 47–275 (KKLMSDNGVK…NAEFRQKDIF (229 aa)) is the ATP-grasp domain. Residue Q58 coordinates GTP. N6-acetyllysine is present on K74. K79 carries the post-translational modification N6-succinyllysine. 91 to 93 (GRG) lines the GTP pocket. 2 positions are modified to N6-acetyllysine: K133 and K140. GTP is bound at residue L147. The residue at position 162 (S162) is a Phosphoserine. K201 and K228 each carry N6-acetyllysine. N244 and D258 together coordinate Mg(2+). Residues K272 and K292 each carry the N6-acetyllysine modification. N309 contributes to the substrate binding site. K339 bears the N6-succinyllysine mark. K348 is modified (N6-acetyllysine). A substrate-binding site is contributed by 366–368 (GIV). Residues K387 and K424 each carry the N6-acetyllysine modification.

Belongs to the succinate/malate CoA ligase beta subunit family. GTP-specific subunit beta subfamily. In terms of assembly, heterodimer of an alpha and a beta subunit. The beta subunit determines specificity for GTP. It depends on Mg(2+) as a cofactor.

The protein localises to the mitochondrion. The catalysed reaction is GTP + succinate + CoA = succinyl-CoA + GDP + phosphate. Its pathway is carbohydrate metabolism; tricarboxylic acid cycle; succinate from succinyl-CoA (ligase route): step 1/1. Its function is as follows. GTP-specific succinyl-CoA synthetase functions in the citric acid cycle (TCA), coupling the hydrolysis of succinyl-CoA to the synthesis of GTP and thus represents the only step of substrate-level phosphorylation in the TCA. The beta subunit provides nucleotide specificity of the enzyme and binds the substrate succinate, while the binding sites for coenzyme A and phosphate are found in the alpha subunit. This is Succinate--CoA ligase [GDP-forming] subunit beta, mitochondrial from Sus scrofa (Pig).